The following is a 324-amino-acid chain: HTH-type transcriptional regulator GlxA (324 aa).

The HTH araC/xylS-type domain maps to leucine 223–arginine 321. 2 DNA-binding regions (H-T-H motif) span residues threonine 240–arginine 261 and isoleucine 288–phenylalanine 311.

This chain is HTH-type transcriptional regulator GlxA (glxA), found in Rhizobium meliloti (strain 1021) (Ensifer meliloti).